Here is a 360-residue protein sequence, read N- to C-terminus: uncharacterized protein (360 aa).

The 104-residue stretch at 45 to 148 folds into the THUMP domain; sequence EDIEDKILQI…KNKTYVSITP (104 aa).

This is an uncharacterized protein from Methanocaldococcus jannaschii (strain ATCC 43067 / DSM 2661 / JAL-1 / JCM 10045 / NBRC 100440) (Methanococcus jannaschii).